Here is a 75-residue protein sequence, read N- to C-terminus: uncharacterized protein (75 aa).

This is an uncharacterized protein from Bacillus subtilis (strain 168).